Here is a 233-residue protein sequence, read N- to C-terminus: N-(5'-phosphoribosyl)anthranilate isomerase (233 aa).

It belongs to the TrpF family.

It carries out the reaction N-(5-phospho-beta-D-ribosyl)anthranilate = 1-(2-carboxyphenylamino)-1-deoxy-D-ribulose 5-phosphate. It functions in the pathway amino-acid biosynthesis; L-tryptophan biosynthesis; L-tryptophan from chorismate: step 3/5. This is N-(5'-phosphoribosyl)anthranilate isomerase from Synechococcus sp. (strain JA-2-3B'a(2-13)) (Cyanobacteria bacterium Yellowstone B-Prime).